The primary structure comprises 227 residues: ATP synthase F(0) complex subunit a (227 aa).

Transmembrane regions (helical) follow at residues Leu14–Pro34, Trp69–Leu89, Gln98–Leu118, Glu132–Ile152, Phe180–Leu200, and Leu202–Tyr222.

Belongs to the ATPase A chain family. Component of the ATP synthase complex composed at least of ATP5F1A/subunit alpha, ATP5F1B/subunit beta, ATP5MC1/subunit c (homooctomer), MT-ATP6/subunit a, MT-ATP8/subunit 8, ATP5ME/subunit e, ATP5MF/subunit f, ATP5MG/subunit g, ATP5MK/subunit k, ATP5MJ/subunit j, ATP5F1C/subunit gamma, ATP5F1D/subunit delta, ATP5F1E/subunit epsilon, ATP5PF/subunit F6, ATP5PB/subunit b, ATP5PD/subunit d, ATP5PO/subunit OSCP. ATP synthase complex consists of a soluble F(1) head domain (subunits alpha(3) and beta(3)) - the catalytic core - and a membrane F(0) domain - the membrane proton channel (subunits c, a, 8, e, f, g, k and j). These two domains are linked by a central stalk (subunits gamma, delta, and epsilon) rotating inside the F1 region and a stationary peripheral stalk (subunits F6, b, d, and OSCP). Interacts with DNAJC30; interaction is direct.

The protein resides in the mitochondrion inner membrane. The catalysed reaction is H(+)(in) = H(+)(out). Subunit a, of the mitochondrial membrane ATP synthase complex (F(1)F(0) ATP synthase or Complex V) that produces ATP from ADP in the presence of a proton gradient across the membrane which is generated by electron transport complexes of the respiratory chain. ATP synthase complex consist of a soluble F(1) head domain - the catalytic core - and a membrane F(1) domain - the membrane proton channel. These two domains are linked by a central stalk rotating inside the F(1) region and a stationary peripheral stalk. During catalysis, ATP synthesis in the catalytic domain of F(1) is coupled via a rotary mechanism of the central stalk subunits to proton translocation. With the subunit c (ATP5MC1), forms the proton-conducting channel in the F(0) domain, that contains two crucial half-channels (inlet and outlet) that facilitate proton movement from the mitochondrial intermembrane space (IMS) into the matrix. Protons are taken up via the inlet half-channel and released through the outlet half-channel, following a Grotthuss mechanism. The sequence is that of ATP synthase F(0) complex subunit a from Tetraodon nigroviridis (Spotted green pufferfish).